A 278-amino-acid polypeptide reads, in one-letter code: TnpB-like protein MJ0751 (278 aa).

Positions 222, 225, 239, and 242 each coordinate Zn(2+).

This sequence in the N-terminal section; belongs to the transposase 2 family. In the C-terminal section; belongs to the transposase 35 family.

This Methanocaldococcus jannaschii (strain ATCC 43067 / DSM 2661 / JAL-1 / JCM 10045 / NBRC 100440) (Methanococcus jannaschii) protein is TnpB-like protein MJ0751.